Here is a 320-residue protein sequence, read N- to C-terminus: ATP-dependent 6-phosphofructokinase (320 aa).

ATP is bound at residue glycine 12. ADP-binding positions include arginine 22 to arginine 26 and arginine 55 to aspartate 60. ATP-binding positions include arginine 73–phenylalanine 74 and glycine 103–serine 106. Residue aspartate 104 coordinates Mg(2+). Threonine 126–aspartate 128 is a binding site for substrate. Aspartate 128 serves as the catalytic Proton acceptor. Arginine 155 is an ADP binding site. Substrate-binding positions include arginine 163 and methionine 170–arginine 172. ADP contacts are provided by residues glycine 186–glutamate 188, lysine 212, and lysine 214–histidine 216. Substrate-binding positions include glutamate 223, arginine 244, and histidine 250–arginine 253.

It belongs to the phosphofructokinase type A (PFKA) family. ATP-dependent PFK group I subfamily. Prokaryotic clade 'B1' sub-subfamily. In terms of assembly, homotetramer. Mg(2+) serves as cofactor.

The protein resides in the cytoplasm. The catalysed reaction is beta-D-fructose 6-phosphate + ATP = beta-D-fructose 1,6-bisphosphate + ADP + H(+). It participates in carbohydrate degradation; glycolysis; D-glyceraldehyde 3-phosphate and glycerone phosphate from D-glucose: step 3/4. Its activity is regulated as follows. Allosterically activated by ADP and other diphosphonucleosides, and allosterically inhibited by phosphoenolpyruvate. Functionally, catalyzes the phosphorylation of D-fructose 6-phosphate to fructose 1,6-bisphosphate by ATP, the first committing step of glycolysis. This chain is ATP-dependent 6-phosphofructokinase, found in Buchnera aphidicola subsp. Baizongia pistaciae (strain Bp).